Reading from the N-terminus, the 502-residue chain is MAISTPMLVTFCVYIFGMILIGFIAWRSTKNFDDYILGGRSLGPFVTALSAGASDMSGWLLMGLPGAIFLSGISESWIAIGLTLGAWINWKLVAGRLRVHTEFNNNALTLPDYFTGRFEDKSRVLRIISALVILLFFTIYCASGIVAGARLFESTFGMSYETALWAGAAATIIYTFIGGFLAVSWTDTVQASLMIFALILTPVMVIVGVGGFSESLEVIKQKSIENVDMLKGLNFVAIISLMGWGLGYFGQPHILARFMAADSHHSIVHARRISMTWMILCLAGAVAVGFFGIAYFNNNPALAGAVNQNSERVFIELAQILFNPWIAGVLLSAILAAVMSTLSCQLLVCSSAITEDLYKAFLRKSASQQELVWVGRVMVLVVALIAIALAANPDNRVLGLVSYAWAGFGAAFGPVVLFSVMWSRMTRNGALAGMIIGAVTVIVWKQYGWLDLYEIIPGFIFGSLGIVIFSLLGKAPTAAMQERFAKADAHYHSAPPSKLQAE.

The next 13 helical transmembrane spans lie at 6 to 26 (PMLV…FIAW), 42 to 62 (LGPF…WLLM), 68 to 88 (IFLS…GAWI), 127 to 147 (IISA…GIVA), 163 to 183 (ALWA…FLAV), 192 to 212 (SLMI…VGGF), 235 to 255 (FVAI…PHIL), 276 to 296 (TWMI…IAYF), 320 to 340 (ILFN…AVMS), 371 to 391 (LVWV…ALAA), 398 to 418 (LGLV…VVLF), 430 to 450 (ALAG…YGWL), and 452 to 472 (LYEI…FSLL).

It belongs to the sodium:solute symporter (SSF) (TC 2.A.21) family.

The protein localises to the cell inner membrane. It carries out the reaction L-proline(in) + Na(+)(in) = L-proline(out) + Na(+)(out). In terms of biological role, catalyzes the sodium-dependent uptake of extracellular L-proline. In Salmonella typhimurium (strain LT2 / SGSC1412 / ATCC 700720), this protein is Sodium/proline symporter.